Consider the following 903-residue polypeptide: Translation initiation factor IF-2 (903 aa).

Disordered stretches follow at residues 57–171 (EKFK…QRRR) and 267–318 (PTPQ…EAVT). Residues 69 to 163 (KKEAKEPSEK…SEPQKPKESL (95 aa)) show a composition bias toward basic and acidic residues. Positions 267–278 (PTPQPMQKTKQP) are enriched in low complexity. Residues 299-308 (RRARKKHKKP) show a composition bias toward basic residues. A tr-type G domain is found at 402–569 (PRAPVITIMG…IVLLQAEILE (168 aa)). The segment at 411–418 (GHVDHGKT) is G1. 411–418 (GHVDHGKT) is a binding site for GTP. The tract at residues 436–440 (GITQH) is G2. Residues 457-460 (DTPG) form a G3 region. GTP contacts are provided by residues 457-461 (DTPGH) and 511-514 (NKMD). Residues 511–514 (NKMD) form a G4 region. Residues 547–549 (SAK) form a G5 region.

The protein belongs to the TRAFAC class translation factor GTPase superfamily. Classic translation factor GTPase family. IF-2 subfamily.

The protein resides in the cytoplasm. One of the essential components for the initiation of protein synthesis. Protects formylmethionyl-tRNA from spontaneous hydrolysis and promotes its binding to the 30S ribosomal subunits. Also involved in the hydrolysis of GTP during the formation of the 70S ribosomal complex. The protein is Translation initiation factor IF-2 of Campylobacter curvus (strain 525.92).